Here is a 407-residue protein sequence, read N- to C-terminus: Imidazolonepropionase (407 aa).

Fe(3+) contacts are provided by H68 and H70. Zn(2+) contacts are provided by H68 and H70. 4-imidazolone-5-propanoate is bound by residues R77, Y140, and H173. Y140 contributes to the N-formimidoyl-L-glutamate binding site. Fe(3+) is bound at residue H238. H238 is a Zn(2+) binding site. Residue Q241 participates in 4-imidazolone-5-propanoate binding. Residue D313 participates in Fe(3+) binding. Residue D313 coordinates Zn(2+). Residues N315 and G317 each coordinate N-formimidoyl-L-glutamate. Position 318 (T318) interacts with 4-imidazolone-5-propanoate.

Belongs to the metallo-dependent hydrolases superfamily. HutI family. The cofactor is Zn(2+). Fe(3+) serves as cofactor.

The protein resides in the cytoplasm. The enzyme catalyses 4-imidazolone-5-propanoate + H2O = N-formimidoyl-L-glutamate. Its pathway is amino-acid degradation; L-histidine degradation into L-glutamate; N-formimidoyl-L-glutamate from L-histidine: step 3/3. Its function is as follows. Catalyzes the hydrolytic cleavage of the carbon-nitrogen bond in imidazolone-5-propanoate to yield N-formimidoyl-L-glutamate. It is the third step in the universal histidine degradation pathway. This is Imidazolonepropionase from Burkholderia ambifaria (strain ATCC BAA-244 / DSM 16087 / CCUG 44356 / LMG 19182 / AMMD) (Burkholderia cepacia (strain AMMD)).